Reading from the N-terminus, the 1128-residue chain is Mastermind-like protein 2 (1128 aa).

Disordered regions lie at residues 1–22 (MGDTAPPQAPTGGLGGAPGAGL) and 81–167 (QHGQ…GDQR). Gly residues predominate over residues 12-22 (GGLGGAPGAGL). Residues 113-122 (PTASQTAAPA) are compositionally biased toward low complexity. At serine 177 the chain carries Phosphoserine. Disordered regions lie at residues 343–509 (FNID…GSNQ), 521–649 (SPSA…SNQP), 677–714 (QVSQQHRQDQHSVVGQNAGPSPSPNPCSNPNTGSGYMN), 758–794 (QDQINRHLTRPPPDYKDQRRNVGNMQPTAQYSGGSST), and 1039–1073 (GTGLSQSRTVSQPPSLAAGGFPSPNQSSRAFQGTD). Composition is skewed to polar residues over residues 347 to 357 (LGQQSQRSTPR) and 374 to 387 (GLTQGPSGSPQLRP). A compositionally biased stretch (low complexity) spans 395–426 (SMASSGLSASSPIPSVPQSQAQPPPATGAARA). A compositionally biased stretch (polar residues) spans 431–446 (QEVSHAQQLKQIAANR). Composition is skewed to low complexity over residues 453-473 (HQQQQQHQPTSWPALPSSAGP) and 484-497 (PSPSFGQQPFSPQS). Over residues 566–584 (NSDQANQQMPSVLPSQSKP) the composition is skewed to polar residues. The segment covering 590-649 (TQQQPQQSSITVQPQQQQQQPQQQQQPQQQQQPQPQQQQQQQPQAQQPAAQPTQPLSNQP) has biased composition (low complexity). 3 stretches are compositionally biased toward polar residues: residues 677–695 (QVSQQHRQDQHSVVGQNAG), 778–794 (NVGNMQPTAQYSGGSST), and 1039–1052 (GTGLSQSRTVSQPP).

It belongs to the mastermind family. As to quaternary structure, interacts through its N-terminal region with the ankyrin repeat region of the Notch proteins NOTCH1, NOTCH2, NOTCH3 and NOTCH4. Forms a DNA-binding complex with Notch proteins and RBPSUH/RBP-J kappa.

The protein localises to the nucleus speckle. Functionally, acts as a transcriptional coactivator for NOTCH proteins. Has been shown to amplify NOTCH-induced transcription of HES1. Potentiates activation by NOTCH3 and NOTCH4 more efficiently than MAML1 or MAML3. This is Mastermind-like protein 2 (MAML2) from Bos taurus (Bovine).